We begin with the raw amino-acid sequence, 79 residues long: RNA-binding protein Hfq (79 aa).

The Sm domain maps to 10–69 (DPFLNALRKEHVPVSIYLVNGIKLQGNIESFDQYVVLLRNTVTQMVYKHAISTVVPARPV).

It belongs to the Hfq family. As to quaternary structure, homohexamer.

Its function is as follows. RNA chaperone that binds small regulatory RNA (sRNAs) and mRNAs to facilitate mRNA translational regulation in response to envelope stress, environmental stress and changes in metabolite concentrations. Also binds with high specificity to tRNAs. In Burkholderia cenocepacia (strain HI2424), this protein is RNA-binding protein Hfq.